The following is a 406-amino-acid chain: Phosphopentomutase (406 aa).

D10, D305, H310, D346, H347, and H358 together coordinate Mn(2+).

Belongs to the phosphopentomutase family. It depends on Mn(2+) as a cofactor.

The protein resides in the cytoplasm. The catalysed reaction is 2-deoxy-alpha-D-ribose 1-phosphate = 2-deoxy-D-ribose 5-phosphate. The enzyme catalyses alpha-D-ribose 1-phosphate = D-ribose 5-phosphate. It functions in the pathway carbohydrate degradation; 2-deoxy-D-ribose 1-phosphate degradation; D-glyceraldehyde 3-phosphate and acetaldehyde from 2-deoxy-alpha-D-ribose 1-phosphate: step 1/2. Its function is as follows. Isomerase that catalyzes the conversion of deoxy-ribose 1-phosphate (dRib-1-P) and ribose 1-phosphate (Rib-1-P) to deoxy-ribose 5-phosphate (dRib-5-P) and ribose 5-phosphate (Rib-5-P), respectively. This chain is Phosphopentomutase, found in Sinorhizobium medicae (strain WSM419) (Ensifer medicae).